The sequence spans 80 residues: Raniseptin-8 (80 aa).

Positions 1–22 (MAFLKKSLFLVLFLGIVSLSIC) are cleaved as a signal peptide. Positions 23–49 (EEEKREGEEEEKQEEENEELSEEELRE) are excised as a propeptide. The tract at residues 27 to 46 (REGEEEEKQEEENEELSEEE) is disordered. A compositionally biased stretch (acidic residues) spans 30-44 (EEEEKQEEENEELSE).

This sequence belongs to the frog skin active peptide (FSAP) family. Dermaseptin subfamily. As to expression, expressed by the skin glands.

It is found in the secreted. In terms of biological role, has antibacterial activity. The polypeptide is Raniseptin-8 (Boana raniceps (Chaco tree frog)).